Consider the following 200-residue polypeptide: Recombination protein RecR (200 aa).

A C4-type zinc finger spans residues 58–73; it reads CSICGNITEDDPCPIC. One can recognise a Toprim domain in the interval 81 to 177; it reads SQILVVEQSQ…KVTRLAHGLS (97 aa).

It belongs to the RecR family.

Functionally, may play a role in DNA repair. It seems to be involved in an RecBC-independent recombinational process of DNA repair. It may act with RecF and RecO. This chain is Recombination protein RecR, found in Limosilactobacillus reuteri (strain DSM 20016) (Lactobacillus reuteri).